A 202-amino-acid polypeptide reads, in one-letter code: MTAESTRKASIERSTKETSIAVSVDLDGVGKFDITTGVGFFDHMLEQLSRHSLIDMRVMAKGDLHIDDHHTVEDTGIALGQAVAKALGERRGIVRYASLDLAMDDTLTGAAVDVSGRAFLVWNVNFTTAKIGTFDTELVREFFQAFAMNAGITLHINNHYGANNHHIAESTFKAVARVLRAALETDPRQKDAIPSTKGSLKG.

Belongs to the imidazoleglycerol-phosphate dehydratase family.

It is found in the cytoplasm. It catalyses the reaction D-erythro-1-(imidazol-4-yl)glycerol 3-phosphate = 3-(imidazol-4-yl)-2-oxopropyl phosphate + H2O. It functions in the pathway amino-acid biosynthesis; L-histidine biosynthesis; L-histidine from 5-phospho-alpha-D-ribose 1-diphosphate: step 6/9. The protein is Imidazoleglycerol-phosphate dehydratase of Brucella abortus (strain S19).